A 782-amino-acid chain; its full sequence is Endonuclease MutS2 (782 aa).

Residue G336–T343 coordinates ATP. The Smr domain maps to L707–K782.

This sequence belongs to the DNA mismatch repair MutS family. MutS2 subfamily. Homodimer. Binds to stalled ribosomes, contacting rRNA.

Functionally, endonuclease that is involved in the suppression of homologous recombination and thus may have a key role in the control of bacterial genetic diversity. Acts as a ribosome collision sensor, splitting the ribosome into its 2 subunits. Detects stalled/collided 70S ribosomes which it binds and splits by an ATP-hydrolysis driven conformational change. Acts upstream of the ribosome quality control system (RQC), a ribosome-associated complex that mediates the extraction of incompletely synthesized nascent chains from stalled ribosomes and their subsequent degradation. Probably generates substrates for RQC. The polypeptide is Endonuclease MutS2 (Staphylococcus aureus (strain bovine RF122 / ET3-1)).